The following is a 1245-amino-acid chain: MRIGKSSGWLNESVSLEYEHVSPPTRPRDTRRRPRAAGDGGLAHLHRRLAVGYAEDTPRTEARSPAPRRPLPVAPASAPPAPSLVPEPPMPVSLPAVSSPRFSAGSSAAITDPFPSLPPTPVLYAMARELEALSDATWQPAVPLPAEPPTDARRGNTVFDEASASSPVIASACPQAFASPPRAPRSARARRARTGGDAWPAPTFLSRPSSSRIGRDVFGKLVALGYSREQIRKLKQESLSEIAKYHTTLTGQGFTHADICRISRRRQSLRVVARNYPELAAALPELTRAHIVDIARQRSGDLALQALLPVATALTAAPLRLSASQIATVAQYGERPAIQALYRLRRKLTRAPLHLTPQQVVAIASNTGGKRALEAVCVQLPVLRAAPYRLSTEQVVAIASNKGGKQALEAVKAHLLDLLGAPYVLDTEQVVAIASHNGGKQALEAVKADLLDLRGAPYALSTEQVVAIASHNGGKQALEAVKADLLELRGAPYALSTEQVVAIASHNGGKQALEAVKAHLLDLRGVPYALSTEQVVAIASHNGGKQALEAVKAQLLDLRGAPYALSTAQVVAIASNGGGKQALEGIGEQLLKLRTAPYGLSTEQVVAIASHDGGKQALEAVGAQLVALRAAPYALSTEQVVAIASNKGGKQALEAVKAQLLELRGAPYALSTAQVVAIASHDGGNQALEAVGTQLVALRAAPYALSTEQVVAIASHDGGKQALEAVGAQLVALRAAPYALNTEQVVAIASSHGGKQALEAVRALFPDLRAAPYALSTAQLVAIASNPGGKQALEAVRALFRELRAAPYALSTEQVVAIASNHGGKQALEAVRALFRGLRAAPYGLSTAQVVAIASSNGGKQALEAVWALLPVLRATPYDLNTAQIVAIASHDGGKPALEAVWAKLPVLRGAPYALSTAQVVAIACISGQQALEAIEAHMPTLRQASHSLSPERVAAIACIGGRSAVEAVRQGLPVKAIRRIRREKAPVAGPPPASLGPTPQELVAVLHFFRAHQQPRQAFVDALAAFQATRPALLRLLSSVGVTEIEALGGTIPDATERWQRLLGRLGFRPATGAAAPSPDSLQGFAQSLERTLGSPGMAGQSACSPHRKRPAETAIAPRSIRRSPNNAGQPSEPWPDQLAWLQRRKRTARSHIRADSAASVPANLHLGTRAQFTPDRLRAEPGPIMQAHTSPASVSFGSHVAFEPGLPDPGTPTSADLASFEAEPFGVGPLDFHLDWLLQILET.

Disordered stretches follow at residues 1 to 87 (MRIG…LVPE) and 173 to 205 (CPQAFASPPRAPRSARARRARTGGDAWPAPTFL). Over residues 67–87 (PRRPLPVAPASAPPAPSLVPE) the composition is skewed to pro residues. The Nuclear localization signal 1 motif lies at 185–191 (RSARARR). A Cryptic repeat -1 repeat occupies 286–320 (LTRAHIVDIARQRSGDLALQALLPVATALTAAPLR). The Cryptic repeat 0 repeat unit spans residues 321–354 (LSASQIATVAQYGERPAIQALYRLRRKLTRAPLH). Core repeat repeat units follow at residues 355 to 389 (LTPQQVVAIASNTGGKRALEAVCVQLPVLRAAPYR), 390 to 424 (LSTEQVVAIASNKGGKQALEAVKAHLLDLLGAPYV), 425 to 459 (LDTEQVVAIASHNGGKQALEAVKADLLDLRGAPYA), 460 to 494 (LSTEQVVAIASHNGGKQALEAVKADLLELRGAPYA), 495 to 529 (LSTEQVVAIASHNGGKQALEAVKAHLLDLRGVPYA), 530 to 564 (LSTEQVVAIASHNGGKQALEAVKAQLLDLRGAPYA), 565 to 599 (LSTAQVVAIASNGGGKQALEGIGEQLLKLRTAPYG), 600 to 634 (LSTEQVVAIASHDGGKQALEAVGAQLVALRAAPYA), 635 to 669 (LSTEQVVAIASNKGGKQALEAVKAQLLELRGAPYA), 670 to 704 (LSTAQVVAIASHDGGNQALEAVGTQLVALRAAPYA), 705 to 739 (LSTEQVVAIASHDGGKQALEAVGAQLVALRAAPYA), 740 to 774 (LNTEQVVAIASSHGGKQALEAVRALFPDLRAAPYA), 775 to 809 (LSTAQLVAIASNPGGKQALEAVRALFRELRAAPYA), 810 to 844 (LSTEQVVAIASNHGGKQALEAVRALFRGLRAAPYG), 845 to 879 (LSTAQVVAIASSNGGKQALEAVWALLPVLRATPYD), and 880 to 914 (LNTAQIVAIASHDGGKPALEAVWAKLPVLRGAPYA). Residues 915–948 (LSTAQVVAIACISGQQALEAIEAHMPTLRQASHS) form a Cryptic repeat +1 repeat. The stretch at 949-982 (LSPERVAAIACIGGRSAVEAVRQGLPVKAIRRIR) is one Cryptic repeat +2 repeat. 3 consecutive short sequence motifs (nuclear localization signal) follow at residues 980–983 (RIRR), 1108–1111 (HRKR), and 1145–1148 (RRKR). Residues 1096-1138 (SPGMAGQSACSPHRKRPAETAIAPRSIRRSPNNAGQPSEPWPD) form a disordered region. The interval 1237 to 1245 (DWLLQILET) is activation domain.

It belongs to the transcription activator-like effector (TALE) family. RipTAL/RTL subfamily.

It is found in the secreted. Its subcellular location is the host nucleus. Its function is as follows. Exported into plant cells, where it is targeted to the nucleus and probably acts as a transcription factor. Binds DNA in a sequence-specific manner. May contribute to plant pathogenicity. This chain is TAL effector protein Brg11, found in Ralstonia nicotianae (strain ATCC BAA-1114 / GMI1000) (Ralstonia solanacearum).